The chain runs to 60 residues: Photosystem II reaction center protein L (60 aa).

The chain crosses the membrane as a helical span at residues Ser-39–Phe-59.

This sequence belongs to the PsbL family. In terms of assembly, PSII is composed of 1 copy each of membrane proteins PsbA, PsbB, PsbC, PsbD, PsbE, PsbF, PsbH, PsbI, PsbJ, PsbK, PsbL, PsbM, PsbT, PsbX, PsbY, PsbZ, Psb30/Ycf12, at least 3 peripheral proteins of the oxygen-evolving complex and a large number of cofactors. It forms dimeric complexes.

It is found in the plastid. It localises to the chloroplast thylakoid membrane. Functionally, one of the components of the core complex of photosystem II (PSII). PSII is a light-driven water:plastoquinone oxidoreductase that uses light energy to abstract electrons from H(2)O, generating O(2) and a proton gradient subsequently used for ATP formation. It consists of a core antenna complex that captures photons, and an electron transfer chain that converts photonic excitation into a charge separation. This subunit is found at the monomer-monomer interface and is required for correct PSII assembly and/or dimerization. The chain is Photosystem II reaction center protein L from Oedogonium cardiacum (Filamentous green alga).